The chain runs to 494 residues: Glutamyl-tRNA(Gln) amidotransferase subunit A (494 aa).

Catalysis depends on charge relay system residues lysine 79 and serine 154. Residue serine 178 is the Acyl-ester intermediate of the active site.

Belongs to the amidase family. GatA subfamily. Heterotrimer of A, B and C subunits.

It catalyses the reaction L-glutamyl-tRNA(Gln) + L-glutamine + ATP + H2O = L-glutaminyl-tRNA(Gln) + L-glutamate + ADP + phosphate + H(+). In terms of biological role, allows the formation of correctly charged Gln-tRNA(Gln) through the transamidation of misacylated Glu-tRNA(Gln) in organisms which lack glutaminyl-tRNA synthetase. The reaction takes place in the presence of glutamine and ATP through an activated gamma-phospho-Glu-tRNA(Gln). This is Glutamyl-tRNA(Gln) amidotransferase subunit A from Clostridium kluyveri (strain NBRC 12016).